The chain runs to 87 residues: Large ribosomal subunit protein bL27 (87 aa).

The tract at residues 1-21 (MAHKKAGGSSRNGRDSESKRL) is disordered.

This sequence belongs to the bacterial ribosomal protein bL27 family.

The protein is Large ribosomal subunit protein bL27 of Paraburkholderia xenovorans (strain LB400).